The primary structure comprises 68 residues: Large ribosomal subunit protein bL32 (68 aa).

It belongs to the bacterial ribosomal protein bL32 family.

The chain is Large ribosomal subunit protein bL32 from Ruegeria pomeroyi (strain ATCC 700808 / DSM 15171 / DSS-3) (Silicibacter pomeroyi).